We begin with the raw amino-acid sequence, 179 residues long: ATP synthase subunit delta, chloroplastic (179 aa).

This sequence belongs to the ATPase delta chain family. In terms of assembly, F-type ATPases have 2 components, F(1) - the catalytic core - and F(0) - the membrane proton channel. F(1) has five subunits: alpha(3), beta(3), gamma(1), delta(1), epsilon(1). CF(0) has four main subunits: a(1), b(1), b'(1) and c(10-14). The alpha and beta chains form an alternating ring which encloses part of the gamma chain. F(1) is attached to F(0) by a central stalk formed by the gamma and epsilon chains, while a peripheral stalk is formed by the delta, b and b' chains.

It localises to the plastid. It is found in the chloroplast thylakoid membrane. Functionally, f(1)F(0) ATP synthase produces ATP from ADP in the presence of a proton or sodium gradient. F-type ATPases consist of two structural domains, F(1) containing the extramembraneous catalytic core and F(0) containing the membrane proton channel, linked together by a central stalk and a peripheral stalk. During catalysis, ATP synthesis in the catalytic domain of F(1) is coupled via a rotary mechanism of the central stalk subunits to proton translocation. In terms of biological role, this protein is part of the stalk that links CF(0) to CF(1). It either transmits conformational changes from CF(0) to CF(1) or is implicated in proton conduction. The protein is ATP synthase subunit delta, chloroplastic of Ochrosphaera neapolitana.